The chain runs to 380 residues: Transmembrane protein 229A (380 aa).

Positions 1–40 (MAGSDVDSEGPARRGGAARRPGAPGGPGSEAAAGCPEPLS) are disordered. Transmembrane regions (helical) follow at residues 51 to 71 (LPAW…DVLV) and 117 to 137 (AFVF…TLAG). Residues 188-236 (RQQQQQQQQQQQQRRGALPVPPGARVPTAAGARRRRPRGPRGAGGAPSQ) form a disordered region. The segment covering 190-202 (QQQQQQQQQQQRR) has biased composition (low complexity). The next 4 membrane-spanning stretches (helical) occupy residues 244–264 (FLFF…FFNV), 278–298 (LWSF…YFHL), 310–330 (VPIY…GLRT), and 343–363 (LNFM…LSVY).

Belongs to the TMEM229 family.

Its subcellular location is the membrane. The polypeptide is Transmembrane protein 229A (TMEM229A) (Homo sapiens (Human)).